A 68-amino-acid polypeptide reads, in one-letter code: MAKSVFNFFHFEILEYLNRFVYHSQYFLPYYCSLEVLGKSRKNWTFQYWCLYITTDKKIIKKKDFYHR.

This is an uncharacterized protein from Saccharomyces cerevisiae (strain ATCC 204508 / S288c) (Baker's yeast).